The primary structure comprises 174 residues: Disulfide bond formation protein B (174 aa).

At 1–14 (MLHIFYIYSKSRKF) the chain is on the cytoplasmic side. A helical transmembrane segment spans residues 15–31 (WAILICSSISLISIALL). Residues 32 to 49 (NQFFFLLKPCILCIYQRC) are Periplasmic-facing. Cysteines 41 and 44 form a disulfide. The helical transmembrane segment at 50–65 (SLFGITIAGLIALISP) threads the bilayer. Over 66–72 (KTTLLRL) the chain is Cytoplasmic. A helical transmembrane segment spans residues 73–90 (FSIFIWLYSAIKGLYFSN). Residues 91–146 (IHMQTTLHPSSSLTCDLFVSFPNWLPLNKWYPIIFDSKISNCYSYPQYLLYLEISQ) lie on the Periplasmic side of the membrane. A disulfide bridge links Cys-105 with Cys-132. Residues 147–165 (WMLLFFLIYLIIAIFTIIS) traverse the membrane as a helical segment. The Cytoplasmic segment spans residues 166-174 (QCHNLFQKK).

This sequence belongs to the DsbB family.

It localises to the cell inner membrane. Its function is as follows. Required for disulfide bond formation in some periplasmic proteins. Acts by oxidizing the DsbA protein. The protein is Disulfide bond formation protein B of Blochmanniella floridana.